Here is a 523-residue protein sequence, read N- to C-terminus: L-tyrosine:2-oxoglutarate aminotransferase ucdG (523 aa).

This sequence belongs to the class-I pyridoxal-phosphate-dependent aminotransferase family. In terms of assembly, homodimer. It depends on pyridoxal 5'-phosphate as a cofactor.

It is found in the cytoplasm. The catalysed reaction is L-tyrosine + 2-oxoglutarate = 3-(4-hydroxyphenyl)pyruvate + L-glutamate. It participates in secondary metabolite biosynthesis. In terms of biological role, nonribosomal peptide synthetase that mediates the biosynthesis of usterphenyllins and uscandidusins, p-terphenyl derivatives. Within the pathway, ucdG is probably involved in the conversion of L-tyrosine into 4-hydroxyphenylpyruvate (HPPA) as a precursor for the usterphenyllin and uscandidusin biosynthesis. UcdE further prenylates position C-14 of ring C of usterphenyllin B to form usterphenyllin A. The pathway begin with the biosynthesis of 4-hydroxyphenylpyruvate (HPPA) from L-tyrosine, possibly by the aminotransferase ucdG. The nonribosomal peptide synthetase ucdA then condenses two HPPA units to produce atromentin. The key step in this pathway is the reduction and dehydration of atromentin to form a terphenyl triol intermediate, performed by the NAD-dependent dehydrogenase ucdB. Further O-methylation by the methyltransferase ucdC forms terphenyllin carrying two methoxy moieties at C-9 and C-12, and subsequent dihydroxylation at C-3 of ring A and C-15 of ring C by the flavin-dependent oxygenase ucdD leads to 3,15-dihydroxyterphenyllin. Prenylation by ucdE at position C-5 of ring A forms usterphenyllin B, and is followed by a second prenylation at position C-14 of ring C to form usterphenyllin A. The following furan ring formation that leads to uscandidusins A and B was proven to be an unexpected spontaneous non-enzymatic reaction. In Aspergillus ustus, this protein is L-tyrosine:2-oxoglutarate aminotransferase ucdG.